Consider the following 96-residue polypeptide: Large ribosomal subunit protein uL23 (96 aa).

This sequence belongs to the universal ribosomal protein uL23 family. In terms of assembly, part of the 50S ribosomal subunit. Contacts protein L29, and trigger factor when it is bound to the ribosome.

One of the early assembly proteins it binds 23S rRNA. One of the proteins that surrounds the polypeptide exit tunnel on the outside of the ribosome. Forms the main docking site for trigger factor binding to the ribosome. This Finegoldia magna (strain ATCC 29328 / DSM 20472 / WAL 2508) (Peptostreptococcus magnus) protein is Large ribosomal subunit protein uL23.